Consider the following 255-residue polypeptide: 4-hydroxy-tetrahydrodipicolinate reductase (255 aa).

Residues 9–14 (GFKGKM), 89–91 (GTT), and 115–118 (APNF) each bind NAD(+). Residue H145 is the Proton donor/acceptor of the active site. Residue H146 coordinates (S)-2,3,4,5-tetrahydrodipicolinate. Catalysis depends on K149, which acts as the Proton donor. 155–156 (GT) is a (S)-2,3,4,5-tetrahydrodipicolinate binding site.

The protein belongs to the DapB family.

It localises to the cytoplasm. It carries out the reaction (S)-2,3,4,5-tetrahydrodipicolinate + NAD(+) + H2O = (2S,4S)-4-hydroxy-2,3,4,5-tetrahydrodipicolinate + NADH + H(+). The enzyme catalyses (S)-2,3,4,5-tetrahydrodipicolinate + NADP(+) + H2O = (2S,4S)-4-hydroxy-2,3,4,5-tetrahydrodipicolinate + NADPH + H(+). It functions in the pathway amino-acid biosynthesis; L-lysine biosynthesis via DAP pathway; (S)-tetrahydrodipicolinate from L-aspartate: step 4/4. In terms of biological role, catalyzes the conversion of 4-hydroxy-tetrahydrodipicolinate (HTPA) to tetrahydrodipicolinate. This Streptococcus sanguinis (strain SK36) protein is 4-hydroxy-tetrahydrodipicolinate reductase.